Here is a 544-residue protein sequence, read N- to C-terminus: Chaperonin GroEL (544 aa).

ATP contacts are provided by residues 29 to 32 (TLGP), Lys-50, 86 to 90 (DGTTT), Gly-413, 479 to 481 (DAA), and Asp-495.

It belongs to the chaperonin (HSP60) family. In terms of assembly, forms a cylinder of 14 subunits composed of two heptameric rings stacked back-to-back. Interacts with the co-chaperonin GroES.

It is found in the cytoplasm. It catalyses the reaction ATP + H2O + a folded polypeptide = ADP + phosphate + an unfolded polypeptide.. Together with its co-chaperonin GroES, plays an essential role in assisting protein folding. The GroEL-GroES system forms a nano-cage that allows encapsulation of the non-native substrate proteins and provides a physical environment optimized to promote and accelerate protein folding. In Borrelia duttonii (strain Ly), this protein is Chaperonin GroEL.